The sequence spans 1641 residues: Histone-lysine N-methyltransferase SETD1 (1641 aa).

Residues 1-23 are disordered; sequence MQDVRNINLVNNSSNSHDSSLAN. Positions 8–23 are enriched in low complexity; sequence NLVNNSSNSHDSSLAN. The RRM domain maps to 101–179; it reads VEVTIVNLND…KILDVFCDPF (79 aa). 6 disordered regions span residues 236-384, 537-596, 831-915, 930-949, 1119-1155, and 1205-1226; these read YTTQ…IDQR, APPF…SDEE, RIRK…SSSS, KARTSEEDSPRGYGQRNLNQ, QEKRIEKSLDKNLQSPNNIVKNNNSPRNKNDETRKTA, and NSKGKTKRTQSPVYSEGGSSQA. Residues 244–284 show a composition bias toward basic and acidic residues; it reads IPNRSRDRNWNRDKERERDRHFKERSRHSSERSYDRDRGMR. Over residues 291 to 300 the composition is skewed to basic residues; it reads IRRRRTFYRR. Composition is skewed to basic and acidic residues over residues 308-341 and 349-384; these read EDSRDILIMTRERSRDSDSRPRDYCRSRERESFR and KGRDQPREKREHYYNSSKDREYRGRDRDRSAEIDQR. Positions 556-568 are enriched in low complexity; sequence EVFSDVNSDSNNS. Basic and acidic residues-rich tracts occupy residues 569–579 and 844–867; these read ENKKRSCEKNN and NFLERDLSDQEEMVQRSDSDKEDS. A compositionally biased stretch (low complexity) spans 904-915; sequence SASSFFSSSSSS. Composition is skewed to basic and acidic residues over residues 930–939 and 1119–1128; these read KARTSEEDSP and QEKRIEKSLD. Residues 1091 to 1132 are a coiled coil; the sequence is SEEEKEYQERRKRNTEYMAQMEREFLEEQEKRIEKSLDKNLQ. Polar residues-rich tracts occupy residues 1129 to 1145 and 1205 to 1217; these read KNLQSPNNIVKNNNSPR and NSKGKTKRTQSPV. The short motif at 1473 to 1478 is the RxxxRR motif element; that stretch reads RSNQRR. Residues 1502–1619 form the SET domain; sequence KQLKFAKSAI…INEEITYDYK (118 aa). S-adenosyl-L-methionine is bound at residue Tyr1618. One can recognise a Post-SET domain in the interval 1625 to 1641; the sequence is EKIPCLCGAQGCRGTLN.

Belongs to the class V-like SAM-binding methyltransferase superfamily. Component of the Set1C/COMPASS complex, composed at least of the catalytic subunit Set1, wds/WDR5, Wdr82, Rbbp5, ash2, Cfp1/CXXC1, hcf and Dpy-30L1.

It localises to the nucleus. Its subcellular location is the chromosome. It catalyses the reaction L-lysyl(4)-[histone H3] + 3 S-adenosyl-L-methionine = N(6),N(6),N(6)-trimethyl-L-lysyl(4)-[histone H3] + 3 S-adenosyl-L-homocysteine + 3 H(+). The catalysed reaction is N(6)-methyl-L-lysyl(4)-[histone H3] + S-adenosyl-L-methionine = N(6),N(6)-dimethyl-L-lysyl(4)-[histone H3] + S-adenosyl-L-homocysteine + H(+). The enzyme catalyses N(6),N(6)-dimethyl-L-lysyl(4)-[histone H3] + S-adenosyl-L-methionine = N(6),N(6),N(6)-trimethyl-L-lysyl(4)-[histone H3] + S-adenosyl-L-homocysteine + H(+). Catalytic component of the COMPASS (Set1C) complex that specifically mono-, di- and trimethylates histone H3 to form H3K4me1/2/3. Binds RNAs which might negatively affect its histone methyltransferase activity. COMPASS recognizes ubiquitinated H2B on one face of the nucleosome which stimulates the methylation of H3 on the opposing face. Set1-dependent trimethylation regulates chromatin changes at active promoters that ensure optimal RNA polymerase II release into productive elongation, thereby contributing to optimal transcription. This Drosophila melanogaster (Fruit fly) protein is Histone-lysine N-methyltransferase SETD1.